The chain runs to 163 residues: MPSFDIVSEVDLQEARNGVDNAVREVESRFDFRGVEATIELNDANKTIKVLSESDFQVNQLLDILRAKLLKRGIEGASLDVPDEFVHSGKTWYVEAKLKQGIESAVQKKIVKLIKDSKLKVQAQIQGEEIRVTGKSRDDLQSVMALVRGGDLGQPFQFKNFRD.

It belongs to the YajQ family.

Functionally, nucleotide-binding protein. The chain is Nucleotide-binding protein YajQ from Salmonella agona (strain SL483).